The following is a 68-amino-acid chain: U-poneritoxin(01)-Om4b (68 aa).

A signal peptide spans methionine 1–alanine 25. The propeptide occupies glutamate 26–alanine 39.

Belongs to the formicidae venom precursor-01 superfamily. In terms of assembly, homo- or heterodimer with PLP4 (AC A0A348G5W0); disulfide-linked. Post-translationally, truncated sequences of this peptide have also been found in the venom. It is possible they have been cleaved in the venom. In terms of tissue distribution, expressed by the venom gland.

The protein resides in the secreted. This homodimer composed of two cationic amphipathic alpha-helical peptides has antimicrobial activities against E.coli, S.aureus (MIC=3.1 uM), and S.cerevisiae (MIC=3.1 uM). It also shows histamine-releasing activity (66.4% at 10 uM) and a weak hemolytic activity (10.5% at 50 uM). In Odontomachus monticola (Trap-jaw ant), this protein is U-poneritoxin(01)-Om4b.